Here is a 441-residue protein sequence, read N- to C-terminus: MPTMTPAFSRASLSEALRSYGLALLLFLATLLAWQPAHAQLRVDISGTGATQYPIAIADFAGDDVRGRALAEVIRADLTRTGQFRLINAAGSGLTVDSPINYDDWRGRGADYVAYGSISQGADGRFEIRYRLADTVKKNQLDGVAFSGTEPELRRIAHQIADRIYEKITGVRGVFATRIAYVLKQGNTYELQVADADGQNPQVALRSREPIISPTWSPDGSKLAYVSFHSGKPVVYVQTLATRSQIPVANFKGNNSAPAWSPDGSQLAVALTQDGLSQIYIVSADGSAKPRRITRSPGIDTEPTFTPDGRSIIFTSDRSGGPQIYQVGLDGGDARRLTFNGSYNISPRISPDGSTLLYVARRDGAFRIASLNLPTGTETLLTDGRDDQSPSFAPNGMQVLYAATQNGRSVLAGVSSDGRVRQTLSVLNGEIREPTWGPFTR.

A signal peptide spans 1–39 (MPTMTPAFSRASLSEALRSYGLALLLFLATLLAWQPAHA).

This sequence belongs to the TolB family. As to quaternary structure, the Tol-Pal system is composed of five core proteins: the inner membrane proteins TolA, TolQ and TolR, the periplasmic protein TolB and the outer membrane protein Pal. They form a network linking the inner and outer membranes and the peptidoglycan layer.

The protein localises to the periplasm. Part of the Tol-Pal system, which plays a role in outer membrane invagination during cell division and is important for maintaining outer membrane integrity. This Bordetella avium (strain 197N) protein is Tol-Pal system protein TolB.